A 217-amino-acid polypeptide reads, in one-letter code: Large ribosomal subunit protein uL3 (217 aa).

This sequence belongs to the universal ribosomal protein uL3 family. Part of the 50S ribosomal subunit. Forms a cluster with proteins L14 and L19.

Its function is as follows. One of the primary rRNA binding proteins, it binds directly near the 3'-end of the 23S rRNA, where it nucleates assembly of the 50S subunit. This is Large ribosomal subunit protein uL3 from Mycolicibacterium paratuberculosis (strain ATCC BAA-968 / K-10) (Mycobacterium paratuberculosis).